Consider the following 699-residue polypeptide: Chitin synthase 7 (699 aa).

6 consecutive transmembrane segments (helical) span residues 19-39 (IVGV…AAFL), 58-80 (SVVV…VVTL), 98-118 (LQWF…LFCI), 445-465 (FMQN…LAII), 474-494 (LPVG…IYFG), and 507-527 (VMFV…IFTA). The disordered stretch occupies residues 628 to 648 (AAGGSGEASEPGTRWAPDPRE).

The protein belongs to the chitin synthase family. Class VI subfamily.

Its subcellular location is the cell membrane. It carries out the reaction [(1-&gt;4)-N-acetyl-beta-D-glucosaminyl](n) + UDP-N-acetyl-alpha-D-glucosamine = [(1-&gt;4)-N-acetyl-beta-D-glucosaminyl](n+1) + UDP + H(+). Polymerizes chitin, a structural polymer of the cell wall and septum, by transferring the sugar moiety of UDP-GlcNAc to the non-reducing end of the growing chitin polymer. Plays a role in cell wall integrity. Required to successfully penetrate the host plants and thus plays a key role in pathogenicity. The protein is Chitin synthase 7 of Verticillium dahliae (strain VdLs.17 / ATCC MYA-4575 / FGSC 10137) (Verticillium wilt).